A 360-amino-acid polypeptide reads, in one-letter code: MAGHLASDFAFSPPPGGGGDGPGGPEPGWVDPRTWMSFQGPPGGSGIGPGVVPGAEVWGLPPCPPPYDLCGGMAYCAPQVGVGPVPPGGLETPQPEGEAGAGVESNSEGASPDPCAAPAGAPKLDKEKLEPNPEESQDIKALQKDLEQFAKLLKQKRITLGYTQADVGLTLGVLFGKVFSQTTICRFEALQLSFKNMCKLRPLLQKWVEEADNNENLQEICKAETLVQARKRKRTSIENRVRGNLESMFLQCPKPTLQQISHIAQQLGLEKDVVRVWFCNRRQKGKRSSSDYSQREDFEAAGSPFTGGPVSSPLAPGPHFGTPGYGGPHFTTLYSSVPFPEGEVFPSVSVTALGSPMHAN.

Disordered stretches follow at residues 1-48 and 86-137; these read MAGH…SGIG and PPGG…EESQ. Residues 4 to 12 carry the 9aaTAD motif; the sequence is HLASDFAFS. Residue Ser-111 is modified to Phosphoserine; by MAPK. Residue Lys-123 forms a Glycyl lysine isopeptide (Lys-Gly) (interchain with G-Cter in SUMO) linkage. The segment covering 123–137 has biased composition (basic and acidic residues); the sequence is KLDKEKLEPNPEESQ. The POU-specific domain occupies 138 to 212; the sequence is DIKALQKDLE…LLQKWVEEAD (75 aa). Residues Arg-157 and Gln-164 each coordinate DNA. DNA-binding regions lie at residues 180–186 and 193–196; these read SQTTICR and SFKN. The segment at residues 230–289 is a DNA-binding region (homeobox); the sequence is RKRKRTSIENRVRGNLESMFLQCPKPTLQQISHIAQQLGLEKDVVRVWFCNRRQKGKRSS. At Thr-235 the chain carries Phosphothreonine. A phosphoserine mark is found at Ser-236, Ser-289, Ser-290, and Ser-355. The segment at 287 to 322 is disordered; that stretch reads RSSSDYSQREDFEAAGSPFTGGPVSSPLAPGPHFGT.

It belongs to the POU transcription factor family. Class-5 subfamily. Interacts with PKM. Interacts with WWP2. Interacts with UBE2I and ZSCAN10. Interacts with PCGF1. Interacts with ESRRB; recruits ESRRB near the POU5F1-SOX2 element in the NANOG proximal promoter; the interaction is DNA independent. Interacts with MAPK8 and MAPK9; the interaction allows MAPK8 and MAPK9 to phosphorylate POU5F1 on Ser-355. Interacts (when phosphorylated on Ser-355) with FBXW8. Interacts with FBXW4. Interacts with SOX2 and SOX15; binds synergistically with either SOX2 or SOX15 to DNA. Interacts with DDX56. Sumoylation enhances the protein stability, DNA binding and transactivation activity. Sumoylation is required for enhanced YES1 expression. In terms of processing, ubiquitinated; undergoes 'Lys-63'-linked polyubiquitination by WWP2 leading to proteasomal degradation. Post-translationally, ERK1/2-mediated phosphorylation at Ser-111 promotes nuclear exclusion and proteasomal degradation. Phosphorylation at Thr-235 and Ser-236 decrease DNA-binding and alters ability to activate transcription. Expressed in immature oocytes.

It localises to the cytoplasm. Its subcellular location is the nucleus. Its function is as follows. Transcription factor that binds to the octamer motif (5'-ATTTGCAT-3'). Forms a trimeric complex with SOX2 or SOX15 on DNA and controls the expression of a number of genes involved in embryonic development such as YES1, FGF4, UTF1 and ZFP206. Critical for early embryogenesis and for embryonic stem cell pluripotency. The chain is POU domain, class 5, transcription factor 1 (POU5F1) from Bos taurus (Bovine).